Consider the following 242-residue polypeptide: tRNA (guanine-N(1)-)-methyltransferase (242 aa).

Residues Gly-112 and Leu-131 to Leu-136 contribute to the S-adenosyl-L-methionine site.

This sequence belongs to the RNA methyltransferase TrmD family. In terms of assembly, homodimer.

It is found in the cytoplasm. It catalyses the reaction guanosine(37) in tRNA + S-adenosyl-L-methionine = N(1)-methylguanosine(37) in tRNA + S-adenosyl-L-homocysteine + H(+). In terms of biological role, specifically methylates guanosine-37 in various tRNAs. The sequence is that of tRNA (guanine-N(1)-)-methyltransferase from Crocosphaera subtropica (strain ATCC 51142 / BH68) (Cyanothece sp. (strain ATCC 51142)).